Reading from the N-terminus, the 300-residue chain is Ribosomal RNA small subunit methyltransferase H (300 aa).

S-adenosyl-L-methionine contacts are provided by residues glycine 46 to histidine 48, aspartate 65, phenylalanine 92, aspartate 107, and glutamine 114.

The protein belongs to the methyltransferase superfamily. RsmH family.

It localises to the cytoplasm. It carries out the reaction cytidine(1402) in 16S rRNA + S-adenosyl-L-methionine = N(4)-methylcytidine(1402) in 16S rRNA + S-adenosyl-L-homocysteine + H(+). Its function is as follows. Specifically methylates the N4 position of cytidine in position 1402 (C1402) of 16S rRNA. The polypeptide is Ribosomal RNA small subunit methyltransferase H (Prochlorococcus marinus (strain MIT 9515)).